Here is a 241-residue protein sequence, read N- to C-terminus: Sugar fermentation stimulation protein homolog (241 aa).

It belongs to the SfsA family.

The protein is Sugar fermentation stimulation protein homolog of Thermosynechococcus vestitus (strain NIES-2133 / IAM M-273 / BP-1).